The primary structure comprises 90 residues: Large ribosomal subunit protein uL23c (90 aa).

Belongs to the universal ribosomal protein uL23 family. Part of the 50S ribosomal subunit.

It localises to the plastid. Its subcellular location is the chloroplast. Binds to 23S rRNA. In Psilotum nudum (Whisk fern), this protein is Large ribosomal subunit protein uL23c (rpl23).